Reading from the N-terminus, the 152-residue chain is Deoxyuridine 5'-triphosphate nucleotidohydrolase (152 aa).

Residues 71 to 73 (RSG), Asn84, 88 to 90 (LID), and Met98 each bind substrate.

Belongs to the dUTPase family. Requires Mg(2+) as cofactor.

It catalyses the reaction dUTP + H2O = dUMP + diphosphate + H(+). It participates in pyrimidine metabolism; dUMP biosynthesis; dUMP from dCTP (dUTP route): step 2/2. This enzyme is involved in nucleotide metabolism: it produces dUMP, the immediate precursor of thymidine nucleotides and it decreases the intracellular concentration of dUTP so that uracil cannot be incorporated into DNA. The protein is Deoxyuridine 5'-triphosphate nucleotidohydrolase of Coxiella burnetii (strain Dugway 5J108-111).